Reading from the N-terminus, the 78-residue chain is Large ribosomal subunit protein uL30 (78 aa).

Over residues 58 to 68 (DDTSPDAETGA) the composition is skewed to acidic residues. Residues 58-78 (DDTSPDAETGADLERDGGNRS) are disordered. The segment covering 69 to 78 (DLERDGGNRS) has biased composition (basic and acidic residues).

The protein belongs to the universal ribosomal protein uL30 family. In terms of assembly, part of the 50S ribosomal subunit.

This Roseiflexus sp. (strain RS-1) protein is Large ribosomal subunit protein uL30.